The primary structure comprises 697 residues: Zinc finger protein 12 (697 aa).

Residue lysine 3 forms a Glycyl lysine isopeptide (Lys-Gly) (interchain with G-Cter in SUMO2) linkage. The 72-residue stretch at 8–79 (VSFKDVAVDF…EGEFLLQSYP (72 aa)) folds into the KRAB domain. Glycyl lysine isopeptide (Lys-Gly) (interchain with G-Cter in SUMO2) cross-links involve residues lysine 98, lysine 179, lysine 182, lysine 209, lysine 215, lysine 224, lysine 239, and lysine 267. 2 C2H2-type zinc fingers span residues 269-291 (YECS…QRTH) and 297-319 (YECN…QRTH). Glycyl lysine isopeptide (Lys-Gly) (interchain with G-Cter in SUMO2) cross-links involve residues lysine 309, lysine 323, lysine 337, and lysine 365. 8 C2H2-type zinc fingers span residues 325–347 (YECN…QRTH), 353–375 (YECS…QRTH), 381–403 (YVCH…QKIH), 409–431 (YKCS…LRTH), 437–459 (YECN…YRTH), 465–487 (YECN…QRVH), 493–515 (YECN…HRTH), and 521–543 (YECS…RRIH). Glycyl lysine isopeptide (Lys-Gly) (interchain with G-Cter in SUMO2) cross-links involve residues lysine 544 and lysine 547. 5 C2H2-type zinc fingers span residues 549–571 (YECY…HRIH), 577–599 (YECS…QRTH), 605–627 (YECY…HRIH), 633–655 (FECN…YRTH), and 661–683 (YECT…QRIH).

It belongs to the krueppel C2H2-type zinc-finger protein family. As to expression, widely expressed in various adult tissues and embryonic developmental stages (isoform 3).

It localises to the nucleus. In terms of biological role, transcriptional repressor which suppresses activation protein 1 (AP-1)- and serum response element (SRE)-mediated transcriptional activity. The sequence is that of Zinc finger protein 12 (ZNF12) from Homo sapiens (Human).